The following is a 147-amino-acid chain: Ponticulin-like protein C3 (147 aa).

A signal peptide spans 1–20 (MKFTKSLLLLIVAVFASSNA). N118 carries GPI-like-anchor amidated asparagine lipidation. N118 carries an N-linked (GlcNAc...) asparagine glycan. A propeptide spans 119-147 (SSESDSSDSTRIGASFALFALALLSMLAL) (removed in mature form).

The protein belongs to the ponticulin family. Post-translationally, the GPI-like-anchor contains a phosphoceramide group, rather than a phosphatidyl group.

The protein localises to the cell membrane. This chain is Ponticulin-like protein C3 (ponC3), found in Dictyostelium discoideum (Social amoeba).